The following is a 649-amino-acid chain: Alpha-amylase (649 aa).

The Nucleophile role is filled by glutamate 124. The Proton donor role is filled by aspartate 215.

This sequence belongs to the glycosyl hydrolase 57 family. As to quaternary structure, homodimer.

The catalysed reaction is Endohydrolysis of (1-&gt;4)-alpha-D-glucosidic linkages in polysaccharides containing three or more (1-&gt;4)-alpha-linked D-glucose units.. In terms of biological role, displays a broad range of substrate specificity, with the capacity to hydrolyze carbohydrates as simple as maltotriose. This is Alpha-amylase (amyA) from Pyrococcus furiosus (strain ATCC 43587 / DSM 3638 / JCM 8422 / Vc1).